The sequence spans 310 residues: Alpha/beta hydrolase domain-containing protein 17A (310 aa).

Residues Ser190, Asp255, and His284 each act as charge relay system in the active site. Ser307 bears the Phosphoserine mark.

It belongs to the AB hydrolase superfamily. ABHD17 family. Post-translationally, palmitoylated on cysteine residues located in a cysteine cluster at the N-terminus which promotes membrane localization. Palmitoylation is required for post-synaptic localization and for depalmitoylating activity towards DLG4/PSD95.

Its subcellular location is the cell membrane. The protein resides in the endosome membrane. It is found in the cell projection. The protein localises to the dendritic spine. It localises to the postsynaptic density membrane. The enzyme catalyses S-hexadecanoyl-L-cysteinyl-[protein] + H2O = L-cysteinyl-[protein] + hexadecanoate + H(+). With respect to regulation, inhibited by palmostatin-B. Hydrolyzes fatty acids from S-acylated cysteine residues in proteins. Has depalmitoylating activity towards NRAS. Has depalmitoylating activity towards DLG4/PSD95. May have depalmitoylating activity towards MAP6. This is Alpha/beta hydrolase domain-containing protein 17A from Homo sapiens (Human).